A 276-amino-acid polypeptide reads, in one-letter code: 4-hydroxy-tetrahydrodipicolinate reductase (276 aa).

NAD(+) is bound at residue 16–21 (GALGKM). Lys-44 contributes to the NADP(+) binding site. Residues 109 to 111 (GTT) and 135 to 138 (APNF) contribute to the NAD(+) site. His-165 acts as the Proton donor/acceptor in catalysis. His-166 lines the (S)-2,3,4,5-tetrahydrodipicolinate pocket. The Proton donor role is filled by Lys-169. Residue 175-176 (GT) coordinates (S)-2,3,4,5-tetrahydrodipicolinate.

The protein belongs to the DapB family.

The protein localises to the cytoplasm. It carries out the reaction (S)-2,3,4,5-tetrahydrodipicolinate + NAD(+) + H2O = (2S,4S)-4-hydroxy-2,3,4,5-tetrahydrodipicolinate + NADH + H(+). The enzyme catalyses (S)-2,3,4,5-tetrahydrodipicolinate + NADP(+) + H2O = (2S,4S)-4-hydroxy-2,3,4,5-tetrahydrodipicolinate + NADPH + H(+). The protein operates within amino-acid biosynthesis; L-lysine biosynthesis via DAP pathway; (S)-tetrahydrodipicolinate from L-aspartate: step 4/4. Catalyzes the conversion of 4-hydroxy-tetrahydrodipicolinate (HTPA) to tetrahydrodipicolinate. This Thermosynechococcus vestitus (strain NIES-2133 / IAM M-273 / BP-1) protein is 4-hydroxy-tetrahydrodipicolinate reductase.